The sequence spans 407 residues: Histone acetyltransferase mst2 (407 aa).

Residues 98 to 372 (PQPTSIRYLY…VNPKLLRWTP (275 aa)) enclose the MYST-type HAT domain. The C2HC MYST-type zinc-finger motif lies at 131–156 (LYICESCLKYMNSDHVLQRHKMKCSW). The residue at position 198 (Lys198) is an N6-acetyllysine; by autocatalysis. Residues 241–243 (ILT), Thr243, and 248–254 (QRRGYGV) contribute to the acetyl-CoA site. Residue Glu274 is the Proton donor/acceptor of the active site. Acetyl-CoA contacts are provided by Ser278 and Ser287.

It belongs to the MYST (SAS/MOZ) family. As to quaternary structure, component of the mst2 complex composed of at least eaf6, mst2, nto1, pdp3, ptf1, ptf2 and tfg3. Post-translationally, autoacetylation at Lys-198 is required for proper function.

It is found in the cytoplasm. The protein localises to the nucleus. It carries out the reaction L-lysyl-[protein] + acetyl-CoA = N(6)-acetyl-L-lysyl-[protein] + CoA + H(+). Functionally, component of the mst2 complex which is a highly specific H3 lysine 14 (H3K14) acetyltransferase that functions together with gcn5 to regulate global levels of H3K14 acetylation (H3K14ac), critical for DNA damage checkpoint activation. Negatively regulates telomere silencing. Telomere silencing is increased due to histone hypoacetylation and/or an increase in the ratio of methylated histones to acetylated histones. Telomeric histone acetylation contributes to normal meiotic progression. The sequence is that of Histone acetyltransferase mst2 (mst2) from Schizosaccharomyces pombe (strain 972 / ATCC 24843) (Fission yeast).